A 617-amino-acid chain; its full sequence is Dihydroxy-acid dehydratase (617 aa).

D81 provides a ligand contact to Mg(2+). Residue C122 coordinates [2Fe-2S] cluster. Mg(2+)-binding residues include D123 and K124. K124 is modified (N6-carboxylysine). Residue C195 coordinates [2Fe-2S] cluster. E492 contacts Mg(2+). The active-site Proton acceptor is the S518.

It belongs to the IlvD/Edd family. In terms of assembly, homodimer. [2Fe-2S] cluster is required as a cofactor. It depends on Mg(2+) as a cofactor.

The catalysed reaction is (2R)-2,3-dihydroxy-3-methylbutanoate = 3-methyl-2-oxobutanoate + H2O. It carries out the reaction (2R,3R)-2,3-dihydroxy-3-methylpentanoate = (S)-3-methyl-2-oxopentanoate + H2O. The protein operates within amino-acid biosynthesis; L-isoleucine biosynthesis; L-isoleucine from 2-oxobutanoate: step 3/4. Its pathway is amino-acid biosynthesis; L-valine biosynthesis; L-valine from pyruvate: step 3/4. In terms of biological role, functions in the biosynthesis of branched-chain amino acids. Catalyzes the dehydration of (2R,3R)-2,3-dihydroxy-3-methylpentanoate (2,3-dihydroxy-3-methylvalerate) into 2-oxo-3-methylpentanoate (2-oxo-3-methylvalerate) and of (2R)-2,3-dihydroxy-3-methylbutanoate (2,3-dihydroxyisovalerate) into 2-oxo-3-methylbutanoate (2-oxoisovalerate), the penultimate precursor to L-isoleucine and L-valine, respectively. The chain is Dihydroxy-acid dehydratase from Buchnera aphidicola subsp. Cinara cedri (strain Cc).